Here is a 382-residue protein sequence, read N- to C-terminus: Intermediate transcription factor 3 large subunit (382 aa).

It belongs to the orthopoxvirus OPG150 family. Heterodimerizes with protein A8 to form the virus intermediate transcription factor (VITF)-3.

Acts with RNA polymerase to initiate transcription from intermediate gene promoters. The sequence is that of Intermediate transcription factor 3 large subunit (OPG150) from Cynomys gunnisoni (Gunnison's prairie dog).